The chain runs to 590 residues: Aspartate--tRNA(Asp/Asn) ligase (590 aa).

Glu-172 provides a ligand contact to L-aspartate. Positions 196-199 (QLFK) are aspartate. Residue Arg-218 coordinates L-aspartate. Residues 218-220 (RDE) and Gln-227 each bind ATP. His-449 serves as a coordination point for L-aspartate. Residue Glu-484 coordinates ATP. Arg-491 is a binding site for L-aspartate. 536-539 (GVDR) lines the ATP pocket.

Belongs to the class-II aminoacyl-tRNA synthetase family. Type 1 subfamily. As to quaternary structure, homodimer.

It localises to the cytoplasm. It carries out the reaction tRNA(Asx) + L-aspartate + ATP = L-aspartyl-tRNA(Asx) + AMP + diphosphate. Its function is as follows. Aspartyl-tRNA synthetase with relaxed tRNA specificity since it is able to aspartylate not only its cognate tRNA(Asp) but also tRNA(Asn). Reaction proceeds in two steps: L-aspartate is first activated by ATP to form Asp-AMP and then transferred to the acceptor end of tRNA(Asp/Asn). In Francisella tularensis subsp. tularensis (strain WY96-3418), this protein is Aspartate--tRNA(Asp/Asn) ligase.